We begin with the raw amino-acid sequence, 958 residues long: Structure-specific endonuclease subunit SLX4 (958 aa).

Disordered stretches follow at residues 89–123 (AESP…KGKT), 183–209 (QKKA…GPID), 326–400 (LATA…LSPT), 531–589 (DLTI…EQHQ), 594–613 (QSNT…SFEL), and 655–849 (STAA…SPPA). The span at 109 to 121 (KKPRTAGARKKKG) shows a compositional bias: basic residues. Residues 332–341 (RRPEEAERST) show a composition bias toward basic and acidic residues. The span at 342-351 (LSRQQDTHIP) shows a compositional bias: polar residues. Residues 364-373 (AASKSASAKP) are compositionally biased toward low complexity. Residues 374–389 (KAAKKAPKPRATKKKQ) show a composition bias toward basic residues. The segment covering 600 to 610 (QPQPAPPPPPS) has biased composition (pro residues). 3 stretches are compositionally biased toward low complexity: residues 655 to 666 (STAAQAAMSTSA), 775 to 787 (TTSP…RAKA), and 821 to 838 (PDSG…SSPD).

It belongs to the SLX4 family. In terms of assembly, forms a heterodimer with SLX1. Post-translationally, phosphorylated in response to DNA damage.

It is found in the nucleus. Functionally, regulatory subunit of the SLX1-SLX4 structure-specific endonuclease that resolves DNA secondary structures generated during DNA repair and recombination. Has endonuclease activity towards branched DNA substrates, introducing single-strand cuts in duplex DNA close to junctions with ss-DNA. The protein is Structure-specific endonuclease subunit SLX4 of Chaetomium globosum (strain ATCC 6205 / CBS 148.51 / DSM 1962 / NBRC 6347 / NRRL 1970) (Soil fungus).